Here is a 90-residue protein sequence, read N- to C-terminus: Small ribosomal subunit protein bS16 (90 aa).

The protein belongs to the bacterial ribosomal protein bS16 family.

This chain is Small ribosomal subunit protein bS16, found in Geobacillus kaustophilus (strain HTA426).